The following is a 163-amino-acid chain: NADH-quinone oxidoreductase subunit I (163 aa).

4Fe-4S ferredoxin-type domains lie at 54–84 (LRRY…IESD) and 94–123 (TRYD…ETQI). 8 residues coordinate [4Fe-4S] cluster: C64, C67, C70, C74, C103, C106, C109, and C113.

The protein belongs to the complex I 23 kDa subunit family. NDH-1 is composed of 14 different subunits. Subunits NuoA, H, J, K, L, M, N constitute the membrane sector of the complex. The cofactor is [4Fe-4S] cluster.

Its subcellular location is the cell inner membrane. It catalyses the reaction a quinone + NADH + 5 H(+)(in) = a quinol + NAD(+) + 4 H(+)(out). Functionally, NDH-1 shuttles electrons from NADH, via FMN and iron-sulfur (Fe-S) centers, to quinones in the respiratory chain. The immediate electron acceptor for the enzyme in this species is believed to be ubiquinone. Couples the redox reaction to proton translocation (for every two electrons transferred, four hydrogen ions are translocated across the cytoplasmic membrane), and thus conserves the redox energy in a proton gradient. The chain is NADH-quinone oxidoreductase subunit I from Cupriavidus necator (strain ATCC 17699 / DSM 428 / KCTC 22496 / NCIMB 10442 / H16 / Stanier 337) (Ralstonia eutropha).